Consider the following 397-residue polypeptide: Sexual differentiation process protein isp7 (397 aa).

Positions 255 to 353 (PTTSIRLLRY…RYTIPFFLQG (99 aa)) constitute a Fe2OG dioxygenase domain.

It belongs to the iron/ascorbate-dependent oxidoreductase family.

This chain is Sexual differentiation process protein isp7 (isp7), found in Schizosaccharomyces pombe (strain 972 / ATCC 24843) (Fission yeast).